Consider the following 387-residue polypeptide: Capsid protein (387 aa).

Over residues 1–33 (MARTKSKPRKRTTVRKARRSVKRRTTTKGTKRK) the composition is skewed to basic residues. Disordered stretches follow at residues 1 to 47 (MART…RGVA) and 365 to 387 (KSAKINDQLNNNQDAANKKREFN). 2 short sequence motifs (nuclear localization signal) span residues 8-15 (PRKRTTVR) and 30-37 (TKRKTAGD). Residues 370–379 (NDQLNNNQDA) show a composition bias toward low complexity.

Its subcellular location is the host nucleus. The protein resides in the virion. Self-assembles to form the virion icosahedral capsid. The polypeptide is Capsid protein (Chaetoceros protobacilladnavirus 2 (Chaetoceros sp. DNA virus 7)).